We begin with the raw amino-acid sequence, 328 residues long: Helicase VP6-A (328 aa).

Disordered regions lie at residues 31–128 (DWTE…TGAN) and 180–237 (VAEQ…SVGI). Basic and acidic residues-rich tracts occupy residues 36–61 (ETNK…EGRN), 71–83 (AKET…DRRI), and 96–109 (PGER…RGDG). Lys110 provides a ligand contact to ATP. A compositionally biased stretch (gly residues) spans 110–128 (KVGGGGGDADAGVGTTGAN). 2 stretches are compositionally biased toward basic and acidic residues: residues 180–205 (VAEQ…AAER) and 214–230 (PHGD…KTSE).

This sequence belongs to the orbivirus VP6 family. Homohexamer.

It is found in the virion. The catalysed reaction is ATP + H2O = ADP + phosphate + H(+). ATP dependent RNA helicase essential for RNA packaging and viral transcription. Possesses ss- and dsRNA-binding capacity. The sequence is that of Helicase VP6-A (Segment-9) from Bluetongue virus 1 (isolate South Africa) (BTV 1).